The chain runs to 220 residues: UPF0711 protein C18orf21 (220 aa).

The tract at residues 117–181 (SRSFVSTLKS…VSTCSSKNTS (65 aa)) is disordered. The segment covering 119-136 (SFVSTLKSNPATPTSKLS) has biased composition (polar residues). Ser-126 is modified (phosphoserine). Phosphothreonine is present on residues Thr-130 and Thr-139. Positions 171-180 (SVSTCSSKNT) are enriched in low complexity.

Belongs to the UPF0711 family.

The polypeptide is UPF0711 protein C18orf21 (C18orf21) (Homo sapiens (Human)).